The sequence spans 476 residues: Sedoheptulokinase (476 aa).

Belongs to the FGGY kinase family.

It localises to the cytoplasm. It catalyses the reaction sedoheptulose + ATP = D-sedoheptulose 7-phosphate + ADP + H(+). Its function is as follows. Acts as a modulator of macrophage activation through control of glucose metabolism. In Mus musculus (Mouse), this protein is Sedoheptulokinase (Shpk).